Reading from the N-terminus, the 267-residue chain is MDNRPIGLLDSGFGGLSVAKKVIEKLPNESTIFIGDNAHIPYGDRTREDIINLTRRSVKFLLEKNVKLIVIACNTATAVAMPTMQKEVEQQIIGVIQSGALAAARTTKNKNVAVVATNVTVASHAYQKEIKFRDPEIKVTELAAPKLAPLVEAQKDYATNLKVVKESLAPLMGKEFDTLVLGCTHYPLIQKEFEEAINNKEVTILDPADQVAQYTFNVMRRDGLFSDSEKAVHEYYTTGNSETFDKLARTFMDDDTLTSKHVDTENY.

Residues 10–11 (DS) and 42–43 (YG) each bind substrate. Catalysis depends on Cys-73, which acts as the Proton donor/acceptor. 74 to 75 (NT) serves as a coordination point for substrate. Catalysis depends on Cys-183, which acts as the Proton donor/acceptor. A substrate-binding site is contributed by 184 to 185 (TH).

This sequence belongs to the aspartate/glutamate racemases family.

The enzyme catalyses L-glutamate = D-glutamate. Its pathway is cell wall biogenesis; peptidoglycan biosynthesis. Provides the (R)-glutamate required for cell wall biosynthesis. The chain is Glutamate racemase from Lactobacillus acidophilus (strain ATCC 700396 / NCK56 / N2 / NCFM).